The primary structure comprises 240 residues: UDP-2,3-diacylglucosamine hydrolase (240 aa).

The Mn(2+) site is built by aspartate 8, histidine 10, aspartate 41, asparagine 79, and histidine 114. Position 79–80 (79–80 (NR)) interacts with substrate. 5 residues coordinate substrate: aspartate 122, serine 160, asparagine 164, lysine 167, and histidine 195. Histidine 195 and histidine 197 together coordinate Mn(2+).

It belongs to the LpxH family. Requires Mn(2+) as cofactor.

Its subcellular location is the cell inner membrane. It carries out the reaction UDP-2-N,3-O-bis[(3R)-3-hydroxytetradecanoyl]-alpha-D-glucosamine + H2O = 2-N,3-O-bis[(3R)-3-hydroxytetradecanoyl]-alpha-D-glucosaminyl 1-phosphate + UMP + 2 H(+). Its pathway is glycolipid biosynthesis; lipid IV(A) biosynthesis; lipid IV(A) from (3R)-3-hydroxytetradecanoyl-[acyl-carrier-protein] and UDP-N-acetyl-alpha-D-glucosamine: step 4/6. In terms of biological role, hydrolyzes the pyrophosphate bond of UDP-2,3-diacylglucosamine to yield 2,3-diacylglucosamine 1-phosphate (lipid X) and UMP by catalyzing the attack of water at the alpha-P atom. Involved in the biosynthesis of lipid A, a phosphorylated glycolipid that anchors the lipopolysaccharide to the outer membrane of the cell. The protein is UDP-2,3-diacylglucosamine hydrolase of Yersinia pseudotuberculosis serotype O:1b (strain IP 31758).